Consider the following 603-residue polypeptide: UvrABC system protein C (603 aa).

The GIY-YIG domain maps to 13–92 (SSPGVYLMKD…IKQHHPKYNV (80 aa)). In terms of domain architecture, UVR spans 205-240 (EEVVKDLEKVIQKASDNLEFEQAANYYRTLSLIKQA).

It belongs to the UvrC family. As to quaternary structure, interacts with UvrB in an incision complex.

Its subcellular location is the cytoplasm. Its function is as follows. The UvrABC repair system catalyzes the recognition and processing of DNA lesions. UvrC both incises the 5' and 3' sides of the lesion. The N-terminal half is responsible for the 3' incision and the C-terminal half is responsible for the 5' incision. In Chlamydia pneumoniae (Chlamydophila pneumoniae), this protein is UvrABC system protein C.